The chain runs to 485 residues: Transcription factor ETV6 (485 aa).

Residues 1–10 show a composition bias toward polar residues; the sequence is MSETPAQSSI. A disordered region spans residues 1–32; the sequence is MSETPAQSSIKQERISYTPPESPVASHRSSTP. Residue lysine 11 is modified to N6-acetyllysine; alternate. Residue lysine 11 forms a Glycyl lysine isopeptide (Lys-Gly) (interchain with G-Cter in SUMO2); alternate linkage. Threonine 18 carries the phosphothreonine modification. Serine 22 carries the post-translational modification Phosphoserine. Positions 41 to 125 constitute a PNT domain; sequence ALRMEEDSIH…ELLQHILKQR (85 aa). The interval 157-210 is disordered; sequence NCVQRTPRTPAESVHHNPPTIELLHRPRSPITTNHRPSPDPEQQRPQRSPLDNM. At threonine 165 the chain carries Phosphothreonine. Phosphoserine occurs at positions 215, 240, and 251. Lysine 284 is covalently cross-linked (Glycyl lysine isopeptide (Lys-Gly) (interchain with G-Cter in SUMO2)). Residue lysine 298 is modified to N6-acetyllysine; alternate. A Glycyl lysine isopeptide (Lys-Gly) (interchain with G-Cter in SUMO2); alternate cross-link involves residue lysine 298. Serine 319 carries the phosphoserine modification. Positions 335–416 form a DNA-binding region, ETS; it reads RLLWDYVYQL…PGQRLLFRFM (82 aa). Glycyl lysine isopeptide (Lys-Gly) (interchain with G-Cter in SUMO2) cross-links involve residues lysine 399 and lysine 417. The interval 440–485 is disordered; the sequence is EQTYQEDEPTIASPVGWPRGNLPTGTAGGVMEAGELGVAVKEETRE.

This sequence belongs to the ETS family. Can form homodimers or heterodimers with TEL2 or FLI1. Interacts with L3MBTL1 and HDAC9.

It localises to the nucleus. Transcriptional repressor; binds to the DNA sequence 5'-CCGGAAGT-3'. Plays a role in hematopoiesis and malignant transformation. The chain is Transcription factor ETV6 (Etv6) from Mus musculus (Mouse).